The primary structure comprises 241 residues: Ribonuclease PH (241 aa).

Phosphate is bound by residues Arg-86 and 124 to 126 (GTR).

This sequence belongs to the RNase PH family. As to quaternary structure, homohexameric ring arranged as a trimer of dimers.

It catalyses the reaction tRNA(n+1) + phosphate = tRNA(n) + a ribonucleoside 5'-diphosphate. Phosphorolytic 3'-5' exoribonuclease that plays an important role in tRNA 3'-end maturation. Removes nucleotide residues following the 3'-CCA terminus of tRNAs; can also add nucleotides to the ends of RNA molecules by using nucleoside diphosphates as substrates, but this may not be physiologically important. Probably plays a role in initiation of 16S rRNA degradation (leading to ribosome degradation) during starvation. The sequence is that of Ribonuclease PH from Hamiltonella defensa subsp. Acyrthosiphon pisum (strain 5AT).